Consider the following 710-residue polypeptide: Solute carrier organic anion transporter family member 3A1 (710 aa).

The residue at position 1 (Met1) is an N-acetylmethionine. Positions 1-15 (MQGKKPGGSSGGGRS) are enriched in gly residues. Residues 1–25 (MQGKKPGGSSGGGRSGELQGDEAQR) are disordered. The Cytoplasmic segment spans residues 1 to 40 (MQGKKPGGSSGGGRSGELQGDEAQRNKKKKKKVSCFSNIK). Residues 41 to 60 (IFLVSECALMLAQGTVGAYL) traverse the membrane as a helical segment. Residues 61–79 (VSVLTTLERRFNLQSADVG) are Extracellular-facing. The helical transmembrane segment at 80 to 100 (VIASSFEIGNLALILFVSYFG) threads the bilayer. Topologically, residues 101–106 (ARGHRP) are cytoplasmic. A helical transmembrane segment spans residues 107 to 131 (RLIGCGGIVMALGALLSALPEFLTH). Residues 132–174 (QYKYEAGEIRWGAEGRDVCATNGSSSDEGPDPDLICRNRTATN) are Extracellular-facing. Asn153 and Asn169 each carry an N-linked (GlcNAc...) asparagine glycan. The helical transmembrane segment at 175–203 (MMYLLLIGAQVLLGIGATPVQPLGVSYID) threads the bilayer. Residues 204 to 222 (DHVRRKDSSLYIGILFTML) are Cytoplasmic-facing. A helical transmembrane segment spans residues 223 to 243 (VFGPACGFILGSFCTKIYVDA). Topologically, residues 244-261 (VFIDTSNLDITPDDPRWI) are extracellular. The helical transmembrane segment at 262 to 286 (GAWWGGFLLCGALLFFSSLLMFGFP) threads the bilayer. Topologically, residues 287–344 (QSLPPHSDPGMESEQAMLPEREYERPKPSNGVLRHPLEPDSSASCFQQLRVIPKVTKH) are cytoplasmic. A helical transmembrane segment spans residues 345-366 (LLSNPVFTCIVLAACMEIAVVA). Residues 367-386 (GFAAFLGKYLEQQFNLTTSS) are Extracellular-facing. Asn381 is a glycosylation site (N-linked (GlcNAc...) asparagine). Residues 387-410 (ANQLLGMTAIPCACLGIFLGGLLV) form a helical membrane-spanning segment. At 411–414 (KKLS) the chain is on the cytoplasmic side. A helical membrane pass occupies residues 415-438 (LSALGAIRMAMLVNLVSTACYVSF). Residues 439 to 539 (LFLGCDTGPV…PGCQEAFLTF (101 aa)) lie on the Extracellular side of the membrane. Asn457 is a glycosylation site (N-linked (GlcNAc...) asparagine). In terms of domain architecture, Kazal-like spans 465–513 (LDPYSPCNNNCECQTDSFTPVCGADGITYLSACFAGCNSTNLTGCACLT). Intrachain disulfides connect Cys471–Cys497, Cys475–Cys486, and Cys477–Cys501. N-linked (GlcNAc...) asparagine glycans are attached at residues Asn502, Asn505, and Asn519. A helical transmembrane segment spans residues 540 to 562 (LCVMCVCSLIGAMAQTPSVIILI). Over 563–571 (RTVSPELKS) the chain is Cytoplasmic. A helical transmembrane segment spans residues 572-597 (YALGVLFLLLRLLGFIPPPLIFGAGI). Residues 598-630 (DSTCLFWSTFCGEQGACVLYDNVVYRYLYVSIA) lie on the Extracellular side of the membrane. A helical transmembrane segment spans residues 631–648 (IALKSFAFILYTTTWQCL). At 649–705 (RKNYKRYIKNHEGGLSTSEFFASTLTLDNLGRDPVPAHQTHRTKFIYNLEDHEWCEN) the chain is on the cytoplasmic side.

Belongs to the organo anion transporter (TC 2.A.60) family. As to expression, widely expressed.

It is found in the basolateral cell membrane. Its subcellular location is the apical cell membrane. The protein resides in the basal cell membrane. The catalysed reaction is L-thyroxine(out) = L-thyroxine(in). The enzyme catalyses prostaglandin E1(out) = prostaglandin E1(in). It carries out the reaction prostaglandin E2(out) = prostaglandin E2(in). It catalyses the reaction prostaglandin F2alpha(out) = prostaglandin F2alpha(in). The catalysed reaction is (5Z,8Z,11Z,14Z)-eicosatetraenoate(out) = (5Z,8Z,11Z,14Z)-eicosatetraenoate(in). The enzyme catalyses taurocholate(out) = taurocholate(in). It carries out the reaction glycocholate(out) = glycocholate(in). It catalyses the reaction estrone 3-sulfate(out) = estrone 3-sulfate(in). The catalysed reaction is argipressin(out) = argipressin(in). Putative organic anion antiporter with apparent broad substrate specificity. Recognizes various substrates including thyroid hormone L-thyroxine, prostanoids such as prostaglandin E1 and E2, bile acids such as taurocholate, glycolate and glycochenodeoxycholate and peptide hormones such as L-arginine vasopressin, likely operating in a tissue-specific manner. The transport mechanism, its electrogenicity and potential tissue-specific counterions remain to be elucidated. The sequence is that of Solute carrier organic anion transporter family member 3A1 (Slco3a1) from Mus musculus (Mouse).